A 170-amino-acid chain; its full sequence is Peptide deformylase (170 aa).

The Fe cation site is built by Cys-93 and His-135. Glu-136 is a catalytic residue. His-139 provides a ligand contact to Fe cation.

This sequence belongs to the polypeptide deformylase family. Fe(2+) is required as a cofactor.

The catalysed reaction is N-terminal N-formyl-L-methionyl-[peptide] + H2O = N-terminal L-methionyl-[peptide] + formate. Removes the formyl group from the N-terminal Met of newly synthesized proteins. Requires at least a dipeptide for an efficient rate of reaction. N-terminal L-methionine is a prerequisite for activity but the enzyme has broad specificity at other positions. The polypeptide is Peptide deformylase (Syntrophobacter fumaroxidans (strain DSM 10017 / MPOB)).